A 327-amino-acid chain; its full sequence is uncharacterized protein (327 aa).

A helical membrane pass occupies residues 266-285; the sequence is IGLLAAGSVALTSLCHLLCY. The interval 297 to 327 is disordered; sequence EEENEAAEETAAGEASAVAAAAVSEEEQQRE. Low complexity predominate over residues 305-319; that stretch reads ETAAGEASAVAAAAV.

This sequence belongs to the HHV-5 UL14 protein family.

Its subcellular location is the host membrane. This is an uncharacterized protein from Human cytomegalovirus (strain Merlin) (HHV-5).